The primary structure comprises 791 residues: KN motif and ankyrin repeat domain-containing protein 3 (791 aa).

Disordered stretches follow at residues 1–37, 56–181, 254–312, 401–425, and 463–514; these read MAKFVLNQNLPDLGGPPLYPGPTGSARSPSSPYSVET, RGPA…GPAQ, ATSD…ETRE, GCTEKTTQTELPVENQPRPTAGDEM, and YESS…GDCE. Over residues 25–34 the composition is skewed to polar residues; that stretch reads SARSPSSPYS. Residues 105 to 125 are compositionally biased toward low complexity; that stretch reads LSPGAFPGLSLPPLSPRSLSR. Basic and acidic residues predominate over residues 127–149; it reads PRVEHTLLETSRRLEQAQARERA. A phosphoserine mark is found at S151, S159, S163, S166, S167, and S176. Low complexity predominate over residues 158–180; it reads RSPRGSGRSSPAPNPALASPGPA. Residues 180 to 229 adopt a coiled-coil conformation; that stretch reads AQLQLVREQMAAALRRLRELEDQARALPELQEQVRALRAEKARLLAGRVQ. 2 stretches are compositionally biased toward basic and acidic residues: residues 254–280 and 293–312; these read ATSDRGVRSRASPRAEDPDGLAARRSE and PDGEPRTRETGTEVVPETRE. Phosphoserine is present on S279. Residues 401-410 show a composition bias toward polar residues; sequence GCTEKTTQTE. The span at 485-496 shows a compositional bias: low complexity; the sequence is SSSSGSDDSSGG. Positions 505 to 514 are enriched in basic and acidic residues; it reads HNDKDAGDCE. 5 ANK repeats span residues 606–636, 640–677, 679–708, 712–742, and 746–775; these read NGNTALHYSVSHGNLAISSLLLDTGVCDVNH, AGYSALMLAALTSVGQEEEDMAVAQRLFSMGDVNAKAS, TGQTALMLAISHGHQDMVAALLECGADVNV, DGATALMCASEYGRLDTVQLLLAQPGCDLTI, and EGTSALAIALEAEQDEVAALLHAHLTSNHQ. Positions 772–783 are enriched in polar residues; that stretch reads SNHQGQSSTGSP. The tract at residues 772 to 791 is disordered; sequence SNHQGQSSTGSPTAKECNDK.

Functionally, may be involved in the control of cytoskeleton formation by regulating actin polymerization. This chain is KN motif and ankyrin repeat domain-containing protein 3, found in Mus musculus (Mouse).